The following is a 492-amino-acid chain: Probable endopolygalacturonase D (492 aa).

A signal peptide spans 1-16 (MKRSALILSFLPLVFG). Cysteine 151 and cysteine 166 are disulfide-bonded. PbH1 repeat units lie at residues 216–238 (GTSV…AYWD), 258–280 (MYNS…EIES), 281–319 (TEHL…DIKE), and 320–341 (SSYF…AVTS). N-linked (GlcNAc...) asparagine glycosylation is present at asparagine 292. The active-site Proton donor is the aspartate 334. An intrachain disulfide couples cysteine 336 to cysteine 352. Residue histidine 356 is part of the active site. PbH1 repeat units lie at residues 371–392 (VNGV…RIKT), 400–422 (VYNI…DVQQ), and 434–478 (TNGV…SITG). N-linked (GlcNAc...) asparagine glycosylation is found at asparagine 407 and asparagine 441. Intrachain disulfides connect cysteine 461–cysteine 466 and cysteine 484–cysteine 491.

This sequence belongs to the glycosyl hydrolase 28 family.

It is found in the secreted. The catalysed reaction is (1,4-alpha-D-galacturonosyl)n+m + H2O = (1,4-alpha-D-galacturonosyl)n + (1,4-alpha-D-galacturonosyl)m.. Involved in maceration and soft-rotting of plant tissue. Hydrolyzes the 1,4-alpha glycosidic bonds of de-esterified pectate in the smooth region of the plant cell wall. This chain is Probable endopolygalacturonase D (pgaD), found in Aspergillus oryzae (strain ATCC 42149 / RIB 40) (Yellow koji mold).